Consider the following 199-residue polypeptide: OPA3-like protein (199 aa).

Positions 98–141 (RSSEKDKKKEEALQNRFKNLEEKLEVQQETINNLTNVIEAIQSS) form a coiled coil.

This sequence belongs to the OPA3 family.

The polypeptide is OPA3-like protein (Dictyostelium discoideum (Social amoeba)).